The chain runs to 565 residues: uncharacterized protein (565 aa).

The next 13 membrane-spanning stretches (helical) occupy residues 8–28, 43–63, 95–115, 137–157, 167–187, 227–247, 268–288, 314–334, 367–387, 424–444, 460–480, 482–502, and 516–536; these read ISFIAAMLIVIGSSIGAGIFF, LAIFNWLVASVAVIAMALALI, MTYLYLPLTFFFMPLYFICSI, WLIWLALALIITTYFLTIPPL, MVVSAVKFIPLVFVPIIGFIV, FTGIGAGMGSFISIAAIFFAY, WALFLGLLITTLFYLILAVAL, IVFGVVNLMIGIGVLGIINGF, VVGVIYCLVLSLTVQVLFTVI, ATWTSLFTFAFIACAIFGAIV, FLPAAWIAVVVNCISVFVTII, PFINLFLLFGYDETVAHTVLG, and VMLIVVLVFFAIISFLPVYVE.

It to M.pneumoniae MPN_095 and MPN_096.

The protein localises to the cell membrane. This is an uncharacterized protein from Mycoplasma pneumoniae (strain ATCC 29342 / M129 / Subtype 1) (Mycoplasmoides pneumoniae).